Consider the following 489-residue polypeptide: Betaine aldehyde dehydrogenase (489 aa).

K(+) is bound by residues T26 and D93. 150–152 (GAW) is a binding site for NAD(+). The active-site Charge relay system is K162. An NAD(+)-binding site is contributed by 176 to 179 (KPSE). A K(+)-binding site is contributed by V180. Position 229 to 232 (229 to 232 (GVET)) interacts with NAD(+). L245 contacts K(+). The Proton acceptor role is filled by E251. Positions 253, 285, and 386 each coordinate NAD(+). The active-site Nucleophile is the C285. C285 bears the Cysteine sulfenic acid (-SOH) mark. K(+) is bound by residues K456 and G459. E463 serves as the catalytic Charge relay system.

It belongs to the aldehyde dehydrogenase family. Dimer of dimers. Requires K(+) as cofactor.

The catalysed reaction is betaine aldehyde + NAD(+) + H2O = glycine betaine + NADH + 2 H(+). It functions in the pathway amine and polyamine biosynthesis; betaine biosynthesis via choline pathway; betaine from betaine aldehyde: step 1/1. Functionally, involved in the biosynthesis of the osmoprotectant glycine betaine. Catalyzes the irreversible oxidation of betaine aldehyde to the corresponding acid. The polypeptide is Betaine aldehyde dehydrogenase (Burkholderia mallei (strain SAVP1)).